Reading from the N-terminus, the 256-residue chain is Ribonuclease T2 (256 aa).

A signal peptide spans 1–24 (MRPAALRGALLGCLCLALLCLGGA). A disulfide bond links C48 and C55. Residue H65 is part of the active site. Disulfide bonds link C75–C121, C184–C241, and C202–C213. N-linked (GlcNAc...) asparagine glycans are attached at residues N76 and N106. Residues E114 and H118 contribute to the active site. The N-linked (GlcNAc...) asparagine glycan is linked to N212.

This sequence belongs to the RNase T2 family. In terms of tissue distribution, ubiquitous. Higher expression levels observed in the temporal lobe and fetal brain.

It localises to the secreted. The protein resides in the lysosome lumen. Its subcellular location is the endoplasmic reticulum lumen. The protein localises to the mitochondrion intermembrane space. It carries out the reaction a ribonucleotidyl-ribonucleotide-RNA + H2O = a 3'-end 3'-phospho-ribonucleotide-RNA + a 5'-end dephospho-ribonucleoside-RNA + H(+). The enzyme catalyses an adenylyl-uridine-RNA = a 3'-end 2',3'-cyclophospho-AMP-RNA + a 5'-end dephospho-uridine-RNA. The catalysed reaction is a guanylyl-uridine-RNA = a 3'-end 2',3'-cyclophospho-GMP-RNA + a 5'-end dephospho-uridine-RNA. With respect to regulation, inhibited by Zn(2+) and Cu(2+). In terms of biological role, ribonuclease that plays an essential role in innate immune response by recognizing and degrading RNAs from microbial pathogens that are subsequently sensed by TLR8. Cleaves preferentially single-stranded RNA molecules between purine and uridine residues, which critically contributes to the supply of catabolic uridine and the generation of purine-2',3'-cyclophosphate-terminated oligoribonucleotides. In turn, RNase T2 degradation products promote the RNA-dependent activation of TLR8. In plasmacytoid dendritic cells, it cooperates with PLD3 or PLD4 5'-&gt;3' exonucleases to process RNA fragments and release 2',3'-cyclic guanosine monophosphate (2',3'-cGMP), a potent stimulatory ligand for TLR7. Also plays a key role in degradation of mitochondrial RNA and processing of non-coding RNA imported from the cytosol into mitochondria. Participates as well in degradation of mitochondrion-associated cytosolic rRNAs. This chain is Ribonuclease T2 (RNASET2), found in Homo sapiens (Human).